We begin with the raw amino-acid sequence, 94 residues long: MGRSLKKGPYVDPKLLKKIRELNEKGEKRIIKTWSRRSVIVPEMVGHTIAVYNGRKHIPVYITENMIGHRLGEFAPTRTFTGHRIPTARITAIK.

This sequence belongs to the universal ribosomal protein uS19 family.

In terms of biological role, protein S19 forms a complex with S13 that binds strongly to the 16S ribosomal RNA. This is Small ribosomal subunit protein uS19 from Dictyoglomus thermophilum (strain ATCC 35947 / DSM 3960 / H-6-12).